Consider the following 196-residue polypeptide: Corrinoid adenosyltransferase (196 aa).

36-42 (GNGKGKT) contacts ATP.

The protein belongs to the Cob(I)alamin adenosyltransferase family.

It is found in the cytoplasm. The catalysed reaction is 2 cob(II)yrinate a,c diamide + reduced [electron-transfer flavoprotein] + 2 ATP = 2 adenosylcob(III)yrinate a,c-diamide + 2 triphosphate + oxidized [electron-transfer flavoprotein] + 3 H(+). The enzyme catalyses 2 cob(II)alamin + reduced [electron-transfer flavoprotein] + 2 ATP = 2 adenosylcob(III)alamin + 2 triphosphate + oxidized [electron-transfer flavoprotein] + 3 H(+). Its pathway is cofactor biosynthesis; adenosylcobalamin biosynthesis; adenosylcobalamin from cob(II)yrinate a,c-diamide: step 2/7. In terms of biological role, required for both de novo synthesis of the corrin ring for the assimilation of exogenous corrinoids. Participates in the adenosylation of a variety of incomplete and complete corrinoids. In Escherichia coli O6:H1 (strain CFT073 / ATCC 700928 / UPEC), this protein is Corrinoid adenosyltransferase (btuR).